Reading from the N-terminus, the 332-residue chain is L-lactate dehydrogenase A chain (332 aa).

Residues 29-57 and Arg-99 contribute to the NAD(+) site; that span reads GMVG…MEDK. Arg-106, Asn-138, and Arg-169 together coordinate substrate. Residue Asn-138 participates in NAD(+) binding. His-193 (proton acceptor) is an active-site residue. Thr-248 contacts substrate.

Belongs to the LDH/MDH superfamily. LDH family. Homotetramer.

Its subcellular location is the cytoplasm. It carries out the reaction (S)-lactate + NAD(+) = pyruvate + NADH + H(+). It participates in fermentation; pyruvate fermentation to lactate; (S)-lactate from pyruvate: step 1/1. Its function is as follows. Interconverts simultaneously and stereospecifically pyruvate and lactate with concomitant interconversion of NADH and NAD(+). This Sphyraena idiastes (Pelican barracuda) protein is L-lactate dehydrogenase A chain (ldha).